The following is a 668-amino-acid chain: MKGRLLQRLRQLSISNSLRGAFLTGALLTLIVSMVSLYSWHEQSSQVRYSLDEYFPRIHSAFLIEGNLNLAVDQLNEFLLAPNTTVRLQLRTQIIQHLDKIERLSQGLQLAERRQLAVILQDSRTLLAELDNALYNMFLVREKVSELSARIDWLHDDFTTELNSLVQDFTWQQGTLLDQIEANQGDAAQYLQRSREVQNEQQQVYTLARIENQIVDDLRDRLNELKSGNNDGMLVETHIRYLENLKKTADENIRALDDWPSTITLRQTIDELLEIGMVKNKMPDTMRDYVAAQKALLDASRAREATLGRFRTLLEAQLGSSHQQMQTFNQRLEQIVRVSGGLILVATLLALLLAWGLNHYFIRSRLVKRFTALNQAVVQIGLGRTDSTIPVYGRDELGRIARLLRHTLGQLNMQRRQLEQEVAERKEIEADLRAMQDELIQTAKLAVVGQTMTTLAHEINQPLNALSMYLFTAGRAIEQGQSGQARNTLTKAEGLINRIDAIIRSLRQFTRRAELETPLYPVDLRQTFVAAWELLAMRHQSRQGALSLPTDTVWVSGDEVRIQQVLVNVLANALDACSHDAVIAVTWQTQGEALEVYIADNGPGWPVALLPSLLKPFTTSKAVGLGIGLSISVSLMAQMKGDLRLASTLTRNACVVLQFSVTDVDDVE.

2 helical membrane-spanning segments follow: residues 20 to 40 and 342 to 362; these read GAFL…LYSW and LILV…HYFI. The HAMP domain occupies 364 to 416; that stretch reads SRLVKRFTALNQAVVQIGLGRTDSTIPVYGRDELGRIARLLRHTLGQLNMQRR. Residues 454-663 enclose the Histidine kinase domain; the sequence is TLAHEINQPL…CVVLQFSVTD (210 aa). Phosphohistidine; by autocatalysis is present on His-457.

Its subcellular location is the cell inner membrane. The enzyme catalyses ATP + protein L-histidine = ADP + protein N-phospho-L-histidine.. In terms of biological role, member of the two-component regulatory system PgtB/PgtA that regulates the inducible phosphoglycerate transport system. Activates PgtA by phosphorylation. This chain is Phosphoglycerate transport system sensor protein PgtB (pgtB), found in Salmonella typhimurium (strain LT2 / SGSC1412 / ATCC 700720).